The primary structure comprises 82 residues: Sec-independent protein translocase protein TatA (82 aa).

Residues 1-21 traverse the membrane as a helical segment; that stretch reads MLGFGPFELILIVVIIALLFG. Basic and acidic residues predominate over residues 36 to 47; the sequence is IKEFKQEMHEPS. The segment at 36–82 is disordered; that stretch reads IKEFKQEMHEPSPPRPQVTDIPSQRLDPVTGAPVSTESTVPASDRRS.

Belongs to the TatA/E family. In terms of assembly, forms a complex with TatC.

The protein resides in the cell membrane. Its function is as follows. Part of the twin-arginine translocation (Tat) system that transports large folded proteins containing a characteristic twin-arginine motif in their signal peptide across membranes. TatA could form the protein-conducting channel of the Tat system. This chain is Sec-independent protein translocase protein TatA, found in Deinococcus deserti (strain DSM 17065 / CIP 109153 / LMG 22923 / VCD115).